A 322-amino-acid chain; its full sequence is Peptidase 1 (322 aa).

A signal peptide spans 1-18 (MKFVLAIASLLVLSVVYA). The propeptide occupies 19 to 99 (YPSEIRTFEE…LKKEFDLDAG (81 aa)). C131 and C171 are disulfide-bonded. C134 is an active-site residue. N152 carries an N-linked (GlcNAc...) asparagine glycan. Catalysis depends on residues H270 and N290.

The protein belongs to the peptidase C1 family. Expressed in the gut.

Its subcellular location is the secreted. It catalyses the reaction Broad endopeptidase specificity.. In terms of biological role, probable thiol protease. The protein is Peptidase 1 of Psoroptes ovis (Sheep scab mite).